Consider the following 1169-residue polypeptide: Chromosome partition protein Smc (1169 aa).

32–39 provides a ligand contact to ATP; that stretch reads PNGCGKSN. Coiled coils occupy residues 170 to 507 and 659 to 1030; these read ISKY…ALGE and REQQ…FQSL.

The protein belongs to the SMC family. Homodimer.

It localises to the cytoplasm. Its function is as follows. Required for chromosome condensation and partitioning. The sequence is that of Chromosome partition protein Smc from Coxiella burnetii (strain RSA 493 / Nine Mile phase I).